Here is a 385-residue protein sequence, read N- to C-terminus: Putative non-inhibitory serpin-Z11 (385 aa).

The tract at residues 324–348 (GTTAVEAMYSPSSPGYSPGYQPPRP) is RCL.

Belongs to the serpin family.

The chain is Putative non-inhibitory serpin-Z11 from Oryza sativa subsp. japonica (Rice).